Here is a 181-residue protein sequence, read N- to C-terminus: Ribonuclease HII (181 aa).

Residues 1–181 (MICGIDEVGR…SLHRKNFKLI (181 aa)) enclose the RNase H type-2 domain. Positions 6, 7, and 98 each coordinate a divalent metal cation.

Belongs to the RNase HII family. The cofactor is Mn(2+). Mg(2+) is required as a cofactor.

It localises to the cytoplasm. It carries out the reaction Endonucleolytic cleavage to 5'-phosphomonoester.. Functionally, endonuclease that specifically degrades the RNA of RNA-DNA hybrids. This chain is Ribonuclease HII, found in Borreliella burgdorferi (strain ZS7) (Borrelia burgdorferi).